The sequence spans 390 residues: GTPase Obg (390 aa).

Residues 1–159 (MKFVDEATIL…RELMLELLLL (159 aa)) enclose the Obg domain. The 174-residue stretch at 160–333 (ADVGMLGLPN…LCWDVMNFLN (174 aa)) folds into the OBG-type G domain. GTP contacts are provided by residues 166 to 173 (GLPNAGKS), 191 to 195 (FTTLI), 213 to 216 (DIPG), 283 to 286 (NKID), and 314 to 316 (SAA). Mg(2+)-binding residues include S173 and T193. The span at 363-384 (EVEAEAESEDDDDWDEEDDDGV) shows a compositional bias: acidic residues. The disordered stretch occupies residues 363 to 390 (EVEAEAESEDDDDWDEEDDDGVEFIYER).

Belongs to the TRAFAC class OBG-HflX-like GTPase superfamily. OBG GTPase family. As to quaternary structure, monomer. Requires Mg(2+) as cofactor.

It is found in the cytoplasm. In terms of biological role, an essential GTPase which binds GTP, GDP and possibly (p)ppGpp with moderate affinity, with high nucleotide exchange rates and a fairly low GTP hydrolysis rate. Plays a role in control of the cell cycle, stress response, ribosome biogenesis and in those bacteria that undergo differentiation, in morphogenesis control. In Yersinia enterocolitica serotype O:8 / biotype 1B (strain NCTC 13174 / 8081), this protein is GTPase Obg.